Consider the following 255-residue polypeptide: Putative transcription factor D5 (255 aa).

In terms of biological role, putative transcription factor required for the expression of viral late genes. This chain is Putative transcription factor D5, found in Escherichia coli (Enterobacteria phage T5).